Reading from the N-terminus, the 141-residue chain is MAMTVHCDIVSAEGEIFSGLVEMVIAHGNLGDLGIAPGHAPLITDLKPGPIRLIKQGGEAEVFYISGGFLEVQPNMVKVLADTVQRAADLDEASAQAAVLAAEKALNEKGADFDYGSATARLAEAAAQLRTVQQIRKKFGG.

Belongs to the ATPase epsilon chain family. F-type ATPases have 2 components, CF(1) - the catalytic core - and CF(0) - the membrane proton channel. CF(1) has five subunits: alpha(3), beta(3), gamma(1), delta(1), epsilon(1). CF(0) has three main subunits: a, b and c.

It localises to the cell inner membrane. In terms of biological role, produces ATP from ADP in the presence of a proton gradient across the membrane. This is ATP synthase epsilon chain from Pseudomonas savastanoi pv. phaseolicola (strain 1448A / Race 6) (Pseudomonas syringae pv. phaseolicola (strain 1448A / Race 6)).